We begin with the raw amino-acid sequence, 1009 residues long: Kinesin-like protein KIN-5C (1009 aa).

Residues 12-359 (NVQVLLRCRP…LDYAHRAKNI (348 aa)) enclose the Kinesin motor domain. 98–105 (GQTGTGKT) provides a ligand contact to ATP. Positions 406–526 (YQEESERKVM…NSSLHQKIGR (121 aa)) form a coiled coil. 2 disordered regions span residues 862–882 (SNEQHDAEVDSARTAAEKDVT) and 987–1009 (YESFATKETKPQQLTRSPLSQVN). Basic and acidic residues-rich tracts occupy residues 863-882 (NEQHDAEVDSARTAAEKDVT) and 987-996 (YESFATKETK). The span at 997 to 1009 (PQQLTRSPLSQVN) shows a compositional bias: polar residues.

Belongs to the TRAFAC class myosin-kinesin ATPase superfamily. Kinesin family. KIN-5/BimC subfamily.

The protein resides in the cytoplasm. It is found in the cytoskeleton. Its subcellular location is the spindle. In terms of biological role, responsible for microtubule translocation. May be important for the organization of phragmoplast-specific arrays of microtubules. Plays an essential role in stabilizing the mitotic spindle. Required during mitotic cytokinesis. The protein is Kinesin-like protein KIN-5C of Arabidopsis thaliana (Mouse-ear cress).